Here is a 101-residue protein sequence, read N- to C-terminus: Protein RnfH (101 aa).

Belongs to the UPF0125 (RnfH) family.

The polypeptide is Protein RnfH (Pseudomonas aeruginosa (strain UCBPP-PA14)).